The sequence spans 1191 residues: Structural maintenance of chromosomes protein 3 (1191 aa).

Residue 32–39 (GRNGSGKS) participates in ATP binding. N6-acetyllysine occurs at positions 105, 106, and 140. Coiled-coil stretches lie at residues 173-357 (EESI…VKEK) and 389-504 (EERD…TGKA). The tract at residues 242–268 (LSAKRETSGEKSRQLRDAQQDARDKME) is disordered. In terms of domain architecture, SMC hinge spans 530–642 (NGYHGIVMNN…CRSMEVSTQL (113 aa)). A coiled-coil region spans residues 668–1022 (YYDTRKSRLE…SIMELMNVLE (355 aa)). T783 carries the post-translational modification Phosphothreonine. Phosphoserine is present on residues S787, S886, S1013, S1065, S1067, S1074, and S1083. The interval 1059 to 1090 (KGDVEGSQSQDEGEGSGESERGSGSQSSVPSV) is disordered.

This sequence belongs to the SMC family. SMC3 subfamily. Forms a heterodimer with SMC1A or SMC1B in cohesin complexes. Cohesin complexes are composed of the SMC1 (SMC1A or meiosis-specific SMC1B) and SMC3 heterodimer attached via their SMC hinge domain, RAD21 which link them, and one STAG protein (STAG1, STAG2 or STAG3), which interacts with RAD21. Also found in meiosis-specific cohesin complexes. Found in a complex with SMC1A, CDCA5 and RAD21, PDS5A/SCC-112 and PDS5B/APRIN. Interacts with MXI1, MXD3 and MXD4. Interacts with NUMA1, and forms a ternary complex with KIF3B and KIFAP3, suggesting a function in tethering the chromosomes to the spindle pole and a function in chromosome movement. Interacts with PDS5A and WAPL; regulated by SMC3 acetylation. Interacts (via SMC hinge domain) with KIAA1328 (via N- and C-terminal domains). Interacts with DDX11, RPGR and STAG3. The cohesin complex interacts with the cohesin loading complex subunits NIPBL/Scc2 (via HEAT repeats) and MAU2/Scc4. NIPBL directly contacts all members of the complex, RAD21, SMC1A/B, SMC3 and STAG1. Interacts with SYCP2. Interacts with the NuRD complex component HDAC2; the interaction is direct. Post-translationally, phosphorylated at Ser-1083 in a SPO11-dependent manner. Acetylation at Lys-105 and Lys-106 by ESCO1 is important for genome stability and S phase sister chromatid cohesion. Regulated by DSCC1, it is required for processive DNA synthesis, coupling sister chromatid cohesion establishment during S phase to DNA replication. Deacetylation by HDAC8, regulates release of the cohesin complex from chromatin. In terms of processing, ubiquitinated by the DCX(DCAF15) complex, leading to its degradation. Ubiquitous.

It localises to the nucleus. It is found in the chromosome. The protein localises to the centromere. Central component of cohesin, a complex required for chromosome cohesion during the cell cycle. The cohesin complex may form a large proteinaceous ring within which sister chromatids can be trapped. At anaphase, the complex is cleaved and dissociates from chromatin, allowing sister chromatids to segregate. Cohesion is coupled to DNA replication and is involved in DNA repair. The cohesin complex also plays an important role in spindle pole assembly during mitosis and in chromosomes movement. This Rattus norvegicus (Rat) protein is Structural maintenance of chromosomes protein 3 (Smc3).